The sequence spans 623 residues: Translation initiation factor IF-2 (623 aa).

A compositionally biased stretch (low complexity) spans 1–18; that stretch reads MTLNKKTNNENSSKTTPK. 2 disordered regions span residues 1-21 and 92-115; these read MTLN…KLSK and PQKE…KLQA. The tr-type G domain maps to 125-293; that stretch reads KTPPIVTIMG…ILLFSEIQNL (169 aa). The segment at 134-141 is G1; that stretch reads GHVDHGKT. 134–141 is a GTP binding site; it reads GHVDHGKT. The segment at 159–163 is G2; it reads GITQH. The interval 180 to 183 is G3; sequence DTPG. Residues 180–184 and 234–237 each bind GTP; these read DTPGH and NKVD. Residues 234-237 are G4; sequence NKVD. The tract at residues 270–272 is G5; that stretch reads SAL.

Belongs to the TRAFAC class translation factor GTPase superfamily. Classic translation factor GTPase family. IF-2 subfamily.

The protein resides in the cytoplasm. Its function is as follows. One of the essential components for the initiation of protein synthesis. Protects formylmethionyl-tRNA from spontaneous hydrolysis and promotes its binding to the 30S ribosomal subunits. Also involved in the hydrolysis of GTP during the formation of the 70S ribosomal complex. This chain is Translation initiation factor IF-2, found in Aster yellows witches'-broom phytoplasma (strain AYWB).